The sequence spans 465 residues: Ribulose bisphosphate carboxylase large chain (465 aa).

Lysine 4 carries the post-translational modification N6,N6,N6-trimethyllysine. 2 residues coordinate substrate: asparagine 113 and threonine 163. Lysine 165 (proton acceptor) is an active-site residue. Lysine 167 is a binding site for substrate. Residues lysine 191, aspartate 193, and glutamate 194 each contribute to the Mg(2+) site. Lysine 191 carries the N6-carboxylysine modification. Histidine 284 (proton acceptor) is an active-site residue. 3 residues coordinate substrate: arginine 285, histidine 317, and serine 369.

Belongs to the RuBisCO large chain family. Type I subfamily. Heterohexadecamer of 8 large chains and 8 small chains; disulfide-linked. The disulfide link is formed within the large subunit homodimers. It depends on Mg(2+) as a cofactor. The disulfide bond which can form in the large chain dimeric partners within the hexadecamer appears to be associated with oxidative stress and protein turnover.

It is found in the plastid. It localises to the chloroplast. The enzyme catalyses 2 (2R)-3-phosphoglycerate + 2 H(+) = D-ribulose 1,5-bisphosphate + CO2 + H2O. It carries out the reaction D-ribulose 1,5-bisphosphate + O2 = 2-phosphoglycolate + (2R)-3-phosphoglycerate + 2 H(+). In terms of biological role, ruBisCO catalyzes two reactions: the carboxylation of D-ribulose 1,5-bisphosphate, the primary event in carbon dioxide fixation, as well as the oxidative fragmentation of the pentose substrate in the photorespiration process. Both reactions occur simultaneously and in competition at the same active site. This is Ribulose bisphosphate carboxylase large chain from Combretum indicum (Rangoon creeper).